Consider the following 463-residue polypeptide: Cysteine--tRNA ligase (463 aa).

Cys-27 is a Zn(2+) binding site. The 'HIGH' region motif lies at 29–39 (ATVQGLPHIGH). The Zn(2+) site is built by Cys-205, His-230, and Glu-234. The 'KMSKS' region signature appears at 261-265 (KMSKS). Lys-264 serves as a coordination point for ATP.

The protein belongs to the class-I aminoacyl-tRNA synthetase family. As to quaternary structure, monomer. It depends on Zn(2+) as a cofactor.

It localises to the cytoplasm. The enzyme catalyses tRNA(Cys) + L-cysteine + ATP = L-cysteinyl-tRNA(Cys) + AMP + diphosphate. The protein is Cysteine--tRNA ligase of Mycolicibacterium vanbaalenii (strain DSM 7251 / JCM 13017 / BCRC 16820 / KCTC 9966 / NRRL B-24157 / PYR-1) (Mycobacterium vanbaalenii).